Reading from the N-terminus, the 130-residue chain is P antigen family member 5 (130 aa).

2 disordered regions span residues 1 to 88 and 101 to 130; these read MQAP…TDVE and DAPGDGPDVREGTLPTFDPTKVLEAGEGQL. Positions 14-26 are enriched in basic and acidic residues; that stretch reads TREEVRDMSEHVT. The span at 27 to 42 shows a compositional bias: polar residues; sequence RSQSSERGNDQESSQP. Phosphothreonine occurs at positions 113 and 116.

It belongs to the GAGE family.

This chain is P antigen family member 5 (PAGE5), found in Homo sapiens (Human).